A 359-amino-acid polypeptide reads, in one-letter code: MYTRTKTKKVFVGDVQIGGQNKIVLQSMTIAKTKHVKKSLKEINDLVKEGADLVRIAVFDDADKRAIRKVVDQSPCPIIADIHFNPDYAIAAIKAGCKKIRLNPGNIKSKEKLREICLLANQYNIPIRVGVNSGSIPYDLMREYGVTSTAMIIAAQRYVRMLKRFGFDNIVISLKTSSALLSMQAYELGAKKFSYPLHLGITEAGTLINGTIKSVAGLTPLLLKGIGDTIRISLSTNPVDEIKVAKKMLNSLGLYENLVDVVACPTCGRLNFDLFKVTKEIEEFVKDLHFPLKVSILGCSVNGPGEAKEADIGIAGGKQEGIIFKKGVVVKSVKQEYLVDELKQMILEEYELFKKKNGK.

C264, C267, C299, and E306 together coordinate [4Fe-4S] cluster.

Belongs to the IspG family. Requires [4Fe-4S] cluster as cofactor.

It catalyses the reaction (2E)-4-hydroxy-3-methylbut-2-enyl diphosphate + oxidized [flavodoxin] + H2O + 2 H(+) = 2-C-methyl-D-erythritol 2,4-cyclic diphosphate + reduced [flavodoxin]. The protein operates within isoprenoid biosynthesis; isopentenyl diphosphate biosynthesis via DXP pathway; isopentenyl diphosphate from 1-deoxy-D-xylulose 5-phosphate: step 5/6. In terms of biological role, converts 2C-methyl-D-erythritol 2,4-cyclodiphosphate (ME-2,4cPP) into 1-hydroxy-2-methyl-2-(E)-butenyl 4-diphosphate. The polypeptide is 4-hydroxy-3-methylbut-2-en-1-yl diphosphate synthase (flavodoxin) (Mycoplasmoides gallisepticum (strain R(low / passage 15 / clone 2)) (Mycoplasma gallisepticum)).